The sequence spans 148 residues: Endothelial differentiation-related factor 1 homolog (148 aa).

The interval 1–26 (MAESDWDTVTVLRKKGPSAAQAKSKQ) is disordered. Residues 81 to 135 (IQQGRQSKGMTQKDLATKINEKPQVIADYESGRAIPNNQVMGKIERAIGLKLRGK) enclose the HTH cro/C1-type domain. Residues 92–111 (QKDLATKINEKPQVIADYES) constitute a DNA-binding region (H-T-H motif).

It localises to the nucleus. Functionally, probable transcriptional coactivator. The protein is Endothelial differentiation-related factor 1 homolog (EDF1) of Gallus gallus (Chicken).